The sequence spans 218 residues: Cell division protein SepF (218 aa).

Residues Glu24–Gln115 form a disordered region. Positions Ala28 to Ala43 are enriched in polar residues. The segment covering Pro47–Arg63 has biased composition (basic and acidic residues).

This sequence belongs to the SepF family. Homodimer. Interacts with FtsZ.

It localises to the cytoplasm. Cell division protein that is part of the divisome complex and is recruited early to the Z-ring. Probably stimulates Z-ring formation, perhaps through the cross-linking of FtsZ protofilaments. Its function overlaps with FtsA. This Streptococcus pyogenes serotype M4 (strain MGAS10750) protein is Cell division protein SepF.